Here is an 867-residue protein sequence, read N- to C-terminus: Cilium assembly protein DZIP1 (867 aa).

Residues 12–203 (MPFQKHVYYP…KANYYQCHFC (192 aa)) form a mediates interaction with PCM1 region. The tract at residues 12 to 367 (MPFQKHVYYP…QDFHNVMQLL (356 aa)) is mediates interaction with GLI3 and localization to the cilium basal body. Residues 154 to 278 (CDGEQSKKLL…SKEYEMQKTK (125 aa)) form a required for interaction with DAZ1 region. Residues 198–221 (YQCHFCDKAFMNQAFLQSHIQRRH) form a C2H2-type zinc finger. Phosphoserine; by PLK1 is present on Ser226. Coiled coils occupy residues 230–340 (YQKN…KSNI), 401–445 (TSMI…FTCN), and 568–588 (DQLH…EREI). The mediates interaction with GDI2 and RAB8A stretch occupies residues 446–617 (PLNSISEPKG…EKALLSSDQC (172 aa)). 3 stretches are compositionally biased toward polar residues: residues 643 to 654 (LIRQKAVSTDRT), 671 to 680 (KSSTITTPPF), and 708 to 718 (NKGSFGKNTVK). Disordered regions lie at residues 643-768 (LIRQ…GGTN) and 796-867 (SLEE…TSDV). Over residues 722–733 (DGTEGSEIEDTD) the composition is skewed to acidic residues. Positions 807-823 (SGKEQKEPPPAKNEPHF) are enriched in basic and acidic residues. The span at 848-859 (SSTLKSSLVTVT) shows a compositional bias: low complexity.

The protein belongs to the DZIP C2H2-type zinc-finger protein family. Interacts with DAZ1. Interacts with the BBSome; recruits the BBSome to centriolar satellites of the cilium. Interacts with PCM1; localizes DZIP1 and the associated BBSome to centriolar satellites. Interacts with RAB8A (GDP-bound inactive form); recruits RAB8A to the basal body of the cilium and prevents its inhibition by GDI2. Interacts with GDI2; negatively regulates the interaction of GDI2 with GDP-bound RAB8A. Interacts with GLI3; retains GLI3 within the cytoplasm. Interacts with CEP164. Interacts with IFT88. Phosphorylation at Ser-226 by PLK1 before mitosis prevents interaction with PCM1 and localization to centriolar satellites. Thereby, it negatively regulates the localization of the BBSome to centriolar satellites. In terms of tissue distribution, predominantly expressed in testis (at protein level). Also expressed in fetal brain, adult oocytes and ovary. Expressed in undifferentiated ES cells. In testis, it is specifically expressed in germ cells (at protein level). Expressed in mature germ cells and secondary spermatocytes, while it is weakly or not expressed in primary spermatocytes.

The protein resides in the cytoplasm. It is found in the cytoskeleton. Its subcellular location is the cilium basal body. It localises to the microtubule organizing center. The protein localises to the centrosome. The protein resides in the centriolar satellite. It is found in the centriole. Its subcellular location is the nucleus. It localises to the nucleus speckle. Its function is as follows. Molecular adapter that recruits protein complexes required for cilium assembly and function to the cilium basal body. At the exit of mitosis, localizes to the basal body and ciliary base of the forming primary cilium where it recruits and activates RAB8A to direct vesicle-mediated transport of proteins to the cilium. Also recruits the BBSome, a complex involved in cilium biogenesis, by bridging it to PCM1 at the centriolar satellites of the cilium. It is also required for the recruitment to the cilium basal body of the intraflagellar transport (IFT) machinery as well as the ciliary appendage proteins CEP164 and NINEIN. Functions as a regulator of Hedgehog signaling both through its role in cilium assembly but also probably through its ability to retain GLI3 within the cytoplasm. It is involved in spermatogenesis through its role in organization of the basal body and assembly of the sperm flagellum. Also indirectly involved in heart development through its function in ciliogenesis. The chain is Cilium assembly protein DZIP1 from Homo sapiens (Human).